The sequence spans 89 residues: MSITAERKQALVAEYANKVGDTGSPEVQIAVLSERISNLTNHFKSHKKDNHSRRGLLKMVSQRRRLLDYLKGVDQNRYQTLIKKLGLRR.

This sequence belongs to the universal ribosomal protein uS15 family. In terms of assembly, part of the 30S ribosomal subunit. Forms a bridge to the 50S subunit in the 70S ribosome, contacting the 23S rRNA.

One of the primary rRNA binding proteins, it binds directly to 16S rRNA where it helps nucleate assembly of the platform of the 30S subunit by binding and bridging several RNA helices of the 16S rRNA. In terms of biological role, forms an intersubunit bridge (bridge B4) with the 23S rRNA of the 50S subunit in the ribosome. This is Small ribosomal subunit protein uS15 from Bartonella tribocorum (strain CIP 105476 / IBS 506).